The following is a 513-amino-acid chain: Histidine ammonia-lyase (513 aa).

Residues 144–146 (ASG) constitute a cross-link (5-imidazolinone (Ala-Gly)). Position 145 is a 2,3-didehydroalanine (Ser) (Ser-145).

Belongs to the PAL/histidase family. Post-translationally, contains an active site 4-methylidene-imidazol-5-one (MIO), which is formed autocatalytically by cyclization and dehydration of residues Ala-Ser-Gly.

The protein resides in the cytoplasm. The enzyme catalyses L-histidine = trans-urocanate + NH4(+). It functions in the pathway amino-acid degradation; L-histidine degradation into L-glutamate; N-formimidoyl-L-glutamate from L-histidine: step 1/3. The chain is Histidine ammonia-lyase from Streptococcus pyogenes serotype M18 (strain MGAS8232).